The primary structure comprises 258 residues: Ferredoxin--NADP reductase (258 aa).

Residues 2–102 (SNLYTERVLS…RKPTGTLVHD (101 aa)) enclose the FAD-binding FR-type domain. Positions 51, 52, 53, 54, 67, 69, 76, 77, and 117 each coordinate FAD. 9 residues coordinate NADP(+): V144, R145, T181, R182, R190, S223, E227, F255, and E257. F255, E257, and K258 together coordinate FAD.

This sequence belongs to the ferredoxin--NADP reductase type 1 family. Monomer. Requires FAD as cofactor.

It catalyses the reaction 2 reduced [2Fe-2S]-[ferredoxin] + NADP(+) + H(+) = 2 oxidized [2Fe-2S]-[ferredoxin] + NADPH. Its function is as follows. Transports electrons between ferredoxin and NADPH. Provides electrons to heme oxygenase (pigA) allowing anaerobic heme degradation. Provides electrons necessary to reduce and mobilize Fe(3+) in a heterooligomeric bacterioferritin (BFR) complex to Fe(2+). Reduction of Fe(3+) in a pure FtnA BFR does not require Bfd. Reduction of Fe(3+) in a pure BfrB BFR does require Bfd. In Pseudomonas aeruginosa (strain ATCC 15692 / DSM 22644 / CIP 104116 / JCM 14847 / LMG 12228 / 1C / PRS 101 / PAO1), this protein is Ferredoxin--NADP reductase.